The chain runs to 123 residues: UPF0382 membrane protein YwdK (123 aa).

The next 4 helical transmembrane spans lie at 3–23, 49–69, 71–91, and 96–116; these read VFII…AFGA, ALGL…GSVT, AGWL…ILSV, and ILGA…IMIV.

It belongs to the UPF0382 family.

It is found in the cell membrane. The chain is UPF0382 membrane protein YwdK (ywdK) from Bacillus subtilis (strain 168).